The following is a 95-amino-acid chain: Co-chaperonin GroES (95 aa).

This sequence belongs to the GroES chaperonin family. As to quaternary structure, heptamer of 7 subunits arranged in a ring. Interacts with the chaperonin GroEL.

The protein resides in the cytoplasm. Its function is as follows. Together with the chaperonin GroEL, plays an essential role in assisting protein folding. The GroEL-GroES system forms a nano-cage that allows encapsulation of the non-native substrate proteins and provides a physical environment optimized to promote and accelerate protein folding. GroES binds to the apical surface of the GroEL ring, thereby capping the opening of the GroEL channel. This chain is Co-chaperonin GroES, found in Aliivibrio salmonicida (strain LFI1238) (Vibrio salmonicida (strain LFI1238)).